The primary structure comprises 533 residues: DNA-directed RNA polymerase III subunit RPC3 (533 aa).

Residues 161–183 form a disordered region; the sequence is PLVPDTDSSDPGPPPPAPNLVIN. Position 194 is a phosphoserine (Ser194). Residues 197-228 form a disordered region; the sequence is GKGKRRRSSDEDAAGEPKAKKPRCTDNEEPTP. Residues 211-222 show a composition bias toward basic and acidic residues; the sequence is GEPKAKKPRCTD.

The protein belongs to the eukaryotic RPC3/POLR3C RNA polymerase subunit family. Component of the RNA polymerase III complex consisting of 17 subunits: a ten-subunit horseshoe-shaped catalytic core composed of POLR3A/RPC1, POLR3B/RPC2, POLR1C/RPAC1, POLR1D/RPAC2, POLR3K/RPC10, POLR2E/RPABC1, POLR2F/RPABC2, POLR2H/RPABC3, POLR2K/RPABC4 and POLR2L/RPABC5; a mobile stalk composed of two subunits POLR3H/RPC8 and CRCP/RPC9, protruding from the core and functioning primarily in transcription initiation; and additional subunits homologous to general transcription factors of the RNA polymerase II machinery, POLR3C/RPC3-POLR3F/RPC6-POLR3G/RPC7 heterotrimer required for transcription initiation and POLR3D/RPC4-POLR3E/RPC5 heterodimer involved in both transcription initiation and termination. Directly interacts with POLR3G/RPC7 and POLR3GL. Directly interacts with POLR3F/RPC6. Interacts with GTF3C4. As part of the RNA polymerase III complex, interacts with PKP2.

It is found in the nucleus. Functionally, DNA-dependent RNA polymerase catalyzes the transcription of DNA into RNA using the four ribonucleoside triphosphates as substrates. Specific peripheric component of RNA polymerase III (Pol III) which synthesizes small non-coding RNAs including 5S rRNA, snRNAs, tRNAs and miRNAs from at least 500 distinct genomic loci. Part of POLR3C/RPC3-POLR3F/RPC6-POLR3G/RPC7 heterotrimer, coordinates the dynamics of Pol III stalk and clamp modules during the transition from apo to elongation state. Pol III plays a key role in sensing and limiting infection by intracellular bacteria and DNA viruses. Acts as a nuclear and cytosolic DNA sensor involved in innate immune response. Can sense non-self dsDNA that serves as template for transcription into dsRNA. The non-self RNA polymerase III transcripts, such as Epstein-Barr virus-encoded RNAs (EBERs) induce type I interferon and NF-kappa-B through the RIG-I pathway. Preferentially binds single-stranded DNA (ssDNA) in a sequence-independent manner. In Rattus norvegicus (Rat), this protein is DNA-directed RNA polymerase III subunit RPC3.